We begin with the raw amino-acid sequence, 209 residues long: uncharacterized protein (209 aa).

The stretch at 13–75 (LSAVDKQMDT…AINLAAVMTD (63 aa)) forms a coiled coil. The interval 107-135 (ATPLPSSNTNNEQSMSTYSSSISGKTSET) is disordered. Over residues 110–119 (LPSSNTNNEQ) the composition is skewed to polar residues. Over residues 120–133 (SMSTYSSSISGKTS) the composition is skewed to low complexity.

It belongs to the asfivirus K205R family.

Its subcellular location is the host cytoplasm. Induces host endoplasmic reticulum stress and consequently activates autophagy and NF-kappa-B signaling pathway. In turn, may induce autophagy-mediated STING1 degradation and innate immune evasion. This is an uncharacterized protein from Ornithodoros (relapsing fever ticks).